The sequence spans 418 residues: L-methionine/branched-chain amino acid exporter YjeH (418 aa).

Topologically, residues 1 to 15 (MSGLKQELGLAQGIG) are periplasmic. Residues 16-36 (LLSTSLLGTGVFAVPALAALV) traverse the membrane as a helical segment. The Cytoplasmic portion of the chain corresponds to 37–41 (AGNNS). A helical transmembrane segment spans residues 42–62 (LWAWPVLIILVFPIAIVFAIL). At 63–89 (GRHYPSAGGVAHFVGMAFGSRLERVTG) the chain is on the periplasmic side. A helical membrane pass occupies residues 90-110 (WLFLSVIPVGLPAALQIAAGF). The Cytoplasmic portion of the chain corresponds to 111 to 113 (GQA). A helical transmembrane segment spans residues 114–134 (MFGWHSWQLLLAELGTLALVW). Over 135 to 147 (YIGTRGASSSANL) the chain is Periplasmic. The helical transmembrane segment at 148–168 (QTVIAGLIVALIVAIWWAGDI) threads the bilayer. The Cytoplasmic portion of the chain corresponds to 169–182 (KPANIPFPAPGNIE). Residues 183–203 (LTGLFAALSVMFWCFVGLEAF) form a helical membrane-spanning segment. Residues 204–219 (AHLASEFKNPERDFPR) lie on the Periplasmic side of the membrane. The chain crosses the membrane as a helical span at residues 220–240 (ALMIGLLLAGLVYWGCTVVVL). At 241–257 (HFDAYGEKMAAAASLPK) the chain is on the cytoplasmic side. The helical transmembrane segment at 258–278 (IVVQLFGVGALWIACVIGYLA) threads the bilayer. Residues 279–317 (CFASLNIYIQSFARLVWSQAQHNPDHYLARLSSRHIPNN) lie on the Periplasmic side of the membrane. The helical transmembrane segment at 318 to 338 (ALNAVLGCCVVSTLVIHALEI) threads the bilayer. At 339–341 (NLD) the chain is on the cytoplasmic side. A helical membrane pass occupies residues 342–362 (ALIIYANGIFIMIYLLCMLAG). At 363–378 (CKLLQGRYRLLAVVGG) the chain is on the periplasmic side. A helical transmembrane segment spans residues 379–399 (LLCVLLLAMVGWKSLYALIML). At 400 to 418 (AGLWLLLPKRKTPENGITT) the chain is on the cytoplasmic side.

Belongs to the amino acid-polyamine-organocation (APC) superfamily. Amino acid efflux (AAE) (TC 2.A.3.13) family.

It localises to the cell inner membrane. It catalyses the reaction L-methionine(in) + H(+)(out) = L-methionine(out) + H(+)(in). The catalysed reaction is L-leucine(in) + H(+)(out) = L-leucine(out) + H(+)(in). It carries out the reaction L-isoleucine(in) + H(+)(out) = L-isoleucine(out) + H(+)(in). The enzyme catalyses L-valine(in) + H(+)(out) = L-valine(out) + H(+)(in). With respect to regulation, efflux of L-methionine is inhibited by the proton ionophore carbonyl cyanide m-chlorophenylhydrazone (CCCP). Catalyzes the efflux of L-methionine, L-leucine, L-isoleucine and L-valine. Activity is dependent on electrochemical potential. The protein is L-methionine/branched-chain amino acid exporter YjeH (yjeH) of Escherichia coli (strain K12).